A 338-amino-acid chain; its full sequence is Ketol-acid reductoisomerase (NADP(+)) (338 aa).

The region spanning 1–181 (MNVFYDKDAD…GGGRAGIIET (181 aa)) is the KARI N-terminal Rossmann domain. NADP(+)-binding positions include 24-27 (YGSQ), R47, and S52. H107 is an active-site residue. G133 lines the NADP(+) pocket. A KARI C-terminal knotted domain is found at 182-327 (NFREETETDL…AKLRAMMPWI (146 aa)). D190, E194, E226, and E230 together coordinate Mg(2+). S251 serves as a coordination point for substrate.

Belongs to the ketol-acid reductoisomerase family. It depends on Mg(2+) as a cofactor.

The enzyme catalyses (2R)-2,3-dihydroxy-3-methylbutanoate + NADP(+) = (2S)-2-acetolactate + NADPH + H(+). It catalyses the reaction (2R,3R)-2,3-dihydroxy-3-methylpentanoate + NADP(+) = (S)-2-ethyl-2-hydroxy-3-oxobutanoate + NADPH + H(+). It participates in amino-acid biosynthesis; L-isoleucine biosynthesis; L-isoleucine from 2-oxobutanoate: step 2/4. It functions in the pathway amino-acid biosynthesis; L-valine biosynthesis; L-valine from pyruvate: step 2/4. Functionally, involved in the biosynthesis of branched-chain amino acids (BCAA). Catalyzes an alkyl-migration followed by a ketol-acid reduction of (S)-2-acetolactate (S2AL) to yield (R)-2,3-dihydroxy-isovalerate. In the isomerase reaction, S2AL is rearranged via a Mg-dependent methyl migration to produce 3-hydroxy-3-methyl-2-ketobutyrate (HMKB). In the reductase reaction, this 2-ketoacid undergoes a metal-dependent reduction by NADPH to yield (R)-2,3-dihydroxy-isovalerate. The protein is Ketol-acid reductoisomerase (NADP(+)) of Burkholderia lata (strain ATCC 17760 / DSM 23089 / LMG 22485 / NCIMB 9086 / R18194 / 383).